The primary structure comprises 121 residues: MGSDTAWSPARMIGIAALAVGIVLGLVFHPGVPEVIQPYLPIAVVAALDAVFGGLRAYLERIFDPKVFVVSFVFNVLVAALIVYVGDQLGVGTQLSTAIIVVLGIRIFGNTAALRRRLFGA.

3 helical membrane-spanning segments follow: residues 12–32, 35–55, and 67–87; these read MIGI…HPGV, VIQP…FGGL, and VFVV…YVGD.

Belongs to the sbp family.

It is found in the cell membrane. This is an uncharacterized protein from Mycobacterium bovis (strain ATCC BAA-935 / AF2122/97).